We begin with the raw amino-acid sequence, 371 residues long: Chaperone protein DnaJ (371 aa).

The 66-residue stretch at 5-70 folds into the J domain; that stretch reads DYYEVLGVNR…QKRAAYDQYG (66 aa). The disordered stretch occupies residues 31–52; sequence KYHPDRNPDNPKAEESFKEAKE. A compositionally biased stretch (basic and acidic residues) spans 32 to 52; it reads YHPDRNPDNPKAEESFKEAKE. The CR-type zinc finger occupies 132-210; sequence RTETKIRIPV…CQGAGRVKKH (79 aa). Zn(2+) contacts are provided by Cys-145, Cys-148, Cys-162, Cys-165, Cys-184, Cys-187, Cys-198, and Cys-201. CXXCXGXG motif repeat units follow at residues 145-152, 162-169, 184-191, and 198-205; these read CETCHGSG, CTTCGGHG, CPKCHGSG, and CPSCQGAG.

This sequence belongs to the DnaJ family. In terms of assembly, homodimer. Zn(2+) is required as a cofactor.

Its subcellular location is the cytoplasm. In terms of biological role, participates actively in the response to hyperosmotic and heat shock by preventing the aggregation of stress-denatured proteins and by disaggregating proteins, also in an autonomous, DnaK-independent fashion. Unfolded proteins bind initially to DnaJ; upon interaction with the DnaJ-bound protein, DnaK hydrolyzes its bound ATP, resulting in the formation of a stable complex. GrpE releases ADP from DnaK; ATP binding to DnaK triggers the release of the substrate protein, thus completing the reaction cycle. Several rounds of ATP-dependent interactions between DnaJ, DnaK and GrpE are required for fully efficient folding. Also involved, together with DnaK and GrpE, in the DNA replication of plasmids through activation of initiation proteins. The polypeptide is Chaperone protein DnaJ (Methylovorus sp. (strain SS1 / DSM 11726)).